Here is a 168-residue protein sequence, read N- to C-terminus: Troponin I, cardiac muscle (168 aa).

Basic and acidic residues predominate over residues 128 to 147 (VRKDDAEKESREVGDWRKNV). The interval 128–168 (VRKDDAEKESREVGDWRKNVDALSGMEGRKKKFEAPGGGQG) is disordered.

Belongs to the troponin I family. Binds to actin and tropomyosin.

Its function is as follows. Troponin I is the inhibitory subunit of troponin, the thin filament regulatory complex which confers calcium-sensitivity to striated muscle actomyosin ATPase activity. In Gallus gallus (Chicken), this protein is Troponin I, cardiac muscle (TNNI3).